A 123-amino-acid polypeptide reads, in one-letter code: UPF0482 protein YE2026 (123 aa).

An N-terminal signal peptide occupies residues 1–31 (MKITSLPRLMRVFLPVAVLALPLAWQTAALA). The segment at 47–66 (GNNDPMSKEQARQSQQQWDD) is disordered.

Belongs to the UPF0482 family.

This Yersinia enterocolitica serotype O:8 / biotype 1B (strain NCTC 13174 / 8081) protein is UPF0482 protein YE2026.